Reading from the N-terminus, the 641-residue chain is Chaperone protein DnaK (641 aa).

Thr-199 is modified (phosphothreonine; by autocatalysis). The tract at residues 603–627 is disordered; sequence YGQQQAEGGAQAAGAAGGSSKADDA. Over residues 604 to 616 the composition is skewed to low complexity; it reads GQQQAEGGAQAAG.

It belongs to the heat shock protein 70 family.

Functionally, acts as a chaperone. The polypeptide is Chaperone protein DnaK (Azoarcus sp. (strain BH72)).